The chain runs to 384 residues: Putative ankyrin repeat protein L72 (384 aa).

7 ANK repeats span residues 88–117, 119–146, 171–200, 202–231, 233–261, 298–324, and 325–357; these read ADMC…NIKN, GNLL…KEFS, DHNV…ILSV, DDSL…DIES, NNYC…NPNN, ILYQ…AGIK, and PTNS…DINV.

This Acanthamoeba polyphaga (Amoeba) protein is Putative ankyrin repeat protein L72.